The chain runs to 490 residues: Ribulose bisphosphate carboxylase large chain (490 aa).

Residues Asn127 and Thr177 each contribute to the substrate site. Lys179 acts as the Proton acceptor in catalysis. Residue Lys181 participates in substrate binding. Mg(2+)-binding residues include Lys205, Asp207, and Glu208. Position 205 is an N6-carboxylysine (Lys205). The Proton acceptor role is filled by His297. Substrate is bound by residues Arg298, His330, and Ser382.

Belongs to the RuBisCO large chain family. Type I subfamily. In terms of assembly, heterohexadecamer of 8 large chains and 8 small chains. Mg(2+) is required as a cofactor.

Its subcellular location is the plastid. The protein localises to the chloroplast. It carries out the reaction 2 (2R)-3-phosphoglycerate + 2 H(+) = D-ribulose 1,5-bisphosphate + CO2 + H2O. The catalysed reaction is D-ribulose 1,5-bisphosphate + O2 = 2-phosphoglycolate + (2R)-3-phosphoglycerate + 2 H(+). Its function is as follows. RuBisCO catalyzes two reactions: the carboxylation of D-ribulose 1,5-bisphosphate, the primary event in carbon dioxide fixation, as well as the oxidative fragmentation of the pentose substrate in the photorespiration process. Both reactions occur simultaneously and in competition at the same active site. The sequence is that of Ribulose bisphosphate carboxylase large chain from Phaeodactylum tricornutum (strain CCAP 1055/1).